We begin with the raw amino-acid sequence, 199 residues long: Inner membrane-spanning protein YciB (199 aa).

The next 6 membrane-spanning stretches (helical) occupy residues 7-27 (HPLF…AANA), 32-52 (FVAT…SYVV), 56-76 (IPLM…LTLV), 93-113 (LFAG…AIMF), 126-146 (VLTL…ELIW), and 153-173 (FWVN…AMMQ).

This sequence belongs to the YciB family.

Its subcellular location is the cell inner membrane. In terms of biological role, plays a role in cell envelope biogenesis, maintenance of cell envelope integrity and membrane homeostasis. This is Inner membrane-spanning protein YciB from Nitrobacter hamburgensis (strain DSM 10229 / NCIMB 13809 / X14).